Consider the following 252-residue polypeptide: MSRKPFIAGNWKMNKNPEEAKAFIEAVASKLPSSELVEAGIAAPALTLSTVLEAAKGSELKIAAQNSYFENSGAFTGENSPKVLAEMGTDYVVIGHSERRDYFHETDQDINKKAKAIFANGLTPIICCGESLETYEAGKAVEFVGAQVSAALAGLSEEQVSSLVIAYEPIWAIGTGKSATQDDAQNMCKAVRDVVAADFGQAVADKVRVQYGGSVKPENVAEYMACPDVDGALVGGASLEAESFLALLDFVK.

Residue 10–12 (NWK) coordinates substrate. Catalysis depends on histidine 96, which acts as the Electrophile. The active-site Proton acceptor is glutamate 168. Substrate-binding positions include glycine 174, serine 214, and 235 to 236 (GG).

This sequence belongs to the triosephosphate isomerase family. In terms of assembly, homodimer.

It localises to the cytoplasm. The catalysed reaction is D-glyceraldehyde 3-phosphate = dihydroxyacetone phosphate. Its pathway is carbohydrate biosynthesis; gluconeogenesis. It functions in the pathway carbohydrate degradation; glycolysis; D-glyceraldehyde 3-phosphate from glycerone phosphate: step 1/1. Involved in the gluconeogenesis. Catalyzes stereospecifically the conversion of dihydroxyacetone phosphate (DHAP) to D-glyceraldehyde-3-phosphate (G3P). The sequence is that of Triosephosphate isomerase from Streptococcus agalactiae serotype Ia (strain ATCC 27591 / A909 / CDC SS700).